A 475-amino-acid chain; its full sequence is Protein FIZZY-RELATED 1 (475 aa).

Residues 1 to 27 (MEEDESTTPKKKSDSQLNLPPSMNRPT) are disordered. Positions 15 to 27 (SQLNLPPSMNRPT) are enriched in polar residues. WD repeat units follow at residues 166–203 (QDDF…VTKL), 207–246 (GVDE…NIRT), 249–289 (GHRL…SKLK), 290–329 (GHKS…PVLR), 332–374 (EHAA…HLNC), 376–417 (DTNS…KLAT), and 420–459 (GHSY…KSQS).

It belongs to the WD repeat CDC20/Fizzy family. In terms of assembly, associates with the APC/C complex. Interacts with CDC20-1, CDC20-2, CYCA1-1, CYCA1-2, CYCA3-4, CYCB1-1 and CYCB1-2. Binds to GIG1. As to expression, expressed in the root tip, predominantly in the root cap, quiescent center cells, surrounding stem cells and columella.

The protein localises to the nucleus. The protein operates within protein modification; protein ubiquitination. In terms of biological role, activator protein that regulates the ubiquitin ligase activity and substrate specificity of the anaphase promoting complex/cyclosome (APC/C). Required for meristem organization and maintenance of quiescent center identity and stem cells. The polypeptide is Protein FIZZY-RELATED 1 (FZR1) (Arabidopsis thaliana (Mouse-ear cress)).